Here is a 561-residue protein sequence, read N- to C-terminus: Putative transport protein YbjL (561 aa).

A run of 5 helical transmembrane segments spans residues 8–28 (LLNG…LCLG), 32–52 (LGSI…LLGQ), 66–86 (FMLF…SIFF), 94–114 (MLAL…GKLF), and 158–178 (NLSL…IVGA). RCK C-terminal domains follow at residues 200-288 (RGLD…SFRN) and 292-373 (VFDR…RIGF). A run of 5 helical transmembrane segments spans residues 383–403 (LLAF…TFQF), 406–426 (FSFG…LGFM), 451–471 (VFMA…LGAI), 475–495 (MLIA…LFGA), and 540–560 (AIAN…WPGL).

This sequence belongs to the AAE transporter (TC 2.A.81) family. YbjL subfamily.

The protein localises to the cell membrane. The sequence is that of Putative transport protein YbjL from Escherichia coli O139:H28 (strain E24377A / ETEC).